Reading from the N-terminus, the 298-residue chain is MQSIDLYSYLYSLLGQIPEGMVTTYGDLAVALGDVKAARACGYMLSRNNDTENIPCYKVIMSDGSLGGYSLGIDEKIRRLRNDGIEINNGRIDLKRYRFNNFDSSYPLKRLQEEQEKIAGLAVYSDDYNEDKICAIDVSYKDEIGYSVMVSFENNEYDFKTFIKETRFPYIPGYLAYREFPYIKELGKNFDGTMIIDANGLLHPRRCGLATYVGVIMNKPSIGVAKSLLTGSIKNGYVYYNNMPLGYMINSRTIVSPGNRISLESSINFIRNLGKDHYPEILKIAHDRTVALRRNNII.

Positions 1–79 (MQSIDLYSYL…SLGIDEKIRR (79 aa)) are probable methylated-DNA--protein-cysteine methyltransferase. Cys-56 is a catalytic residue. Residues 80-298 (LRNDGIEINN…TVALRRNNII (219 aa)) are endonuclease V. Mg(2+) contacts are provided by Asp-137 and Asp-197.

This sequence in the N-terminal section; belongs to the MGMT family. It in the C-terminal section; belongs to the endonuclease V family. It depends on Mg(2+) as a cofactor.

It is found in the cytoplasm. The catalysed reaction is Endonucleolytic cleavage at apurinic or apyrimidinic sites to products with a 5'-phosphate.. In terms of biological role, DNA repair enzyme involved in the repair of deaminated bases. Selectively cleaves double-stranded DNA at the second phosphodiester bond 3' to a deoxyinosine leaving behind the intact lesion on the nicked DNA. The polypeptide is Bifunctional methyltransferase/endonuclease (Picrophilus torridus (strain ATCC 700027 / DSM 9790 / JCM 10055 / NBRC 100828 / KAW 2/3)).